Reading from the N-terminus, the 411-residue chain is CinA-like protein (411 aa).

This sequence belongs to the CinA family.

The chain is CinA-like protein from Dictyoglomus turgidum (strain DSM 6724 / Z-1310).